A 260-amino-acid polypeptide reads, in one-letter code: UPF0294 protein plu0699 (260 aa).

The protein belongs to the UPF0294 family.

The protein localises to the cytoplasm. In Photorhabdus laumondii subsp. laumondii (strain DSM 15139 / CIP 105565 / TT01) (Photorhabdus luminescens subsp. laumondii), this protein is UPF0294 protein plu0699.